A 442-amino-acid chain; its full sequence is Cell division protein FtsA (442 aa).

This sequence belongs to the FtsA/MreB family. As to quaternary structure, self-interacts. Interacts with FtsZ.

It localises to the cell inner membrane. Functionally, cell division protein that is involved in the assembly of the Z ring. May serve as a membrane anchor for the Z ring. This Rhizobium meliloti (strain 1021) (Ensifer meliloti) protein is Cell division protein FtsA.